Consider the following 514-residue polypeptide: Embryonic protein UVS.2 (514 aa).

Residues 1 to 19 (MDVKISAILLACIIQYAVS) form the signal peptide. The 197-residue stretch at 90–286 (SAINDARFLW…SKINKLYECN (197 aa)) folds into the Peptidase M12A domain. N-linked (GlcNAc...) asparagine glycosylation is present at Asn112. Disulfide bonds link Cys137–Cys285, Cys158–Cys178, Cys288–Cys314, Cys340–Cys363, Cys402–Cys428, and Cys455–Cys475. His186 lines the Zn(2+) pocket. The active site involves Glu187. Residues His190 and His196 each coordinate Zn(2+). A glycan (N-linked (GlcNAc...) asparagine) is linked at Asn199. 2 consecutive CUB domains span residues 288-400 (CSNL…YGSI) and 402-513 (CGGA…YTFV). 3 N-linked (GlcNAc...) asparagine glycosylation sites follow: Asn421, Asn427, and Asn464.

It depends on Zn(2+) as a cofactor.

The polypeptide is Embryonic protein UVS.2 (Xenopus laevis (African clawed frog)).